The following is a 185-amino-acid chain: Ribosome-recycling factor (185 aa).

Positions 132–152 are disordered; the sequence is RRDANEQLKKMEKDSELTEDD.

This sequence belongs to the RRF family.

The protein localises to the cytoplasm. Functionally, responsible for the release of ribosomes from messenger RNA at the termination of protein biosynthesis. May increase the efficiency of translation by recycling ribosomes from one round of translation to another. The polypeptide is Ribosome-recycling factor (Alkaliphilus metalliredigens (strain QYMF)).